A 208-amino-acid polypeptide reads, in one-letter code: Outer-membrane lipoprotein carrier protein (208 aa).

An N-terminal signal peptide occupies residues 1–21 (MKRTATLLVVALILALNTAQA).

This sequence belongs to the LolA family. Monomer.

The protein localises to the periplasm. Participates in the translocation of lipoproteins from the inner membrane to the outer membrane. Only forms a complex with a lipoprotein if the residue after the N-terminal Cys is not an aspartate (The Asp acts as a targeting signal to indicate that the lipoprotein should stay in the inner membrane). The chain is Outer-membrane lipoprotein carrier protein from Halorhodospira halophila (strain DSM 244 / SL1) (Ectothiorhodospira halophila (strain DSM 244 / SL1)).